A 439-amino-acid polypeptide reads, in one-letter code: Paraneoplastic antigen-like protein 8A (439 aa).

The interval 213-439 (ETPNNWNATE…RRATNESRKV (227 aa)) is disordered. A compositionally biased stretch (basic residues) spans 231-249 (LVRRAGAKSRSRRKKQKKN). Over residues 403–419 (KAPQGQQPAEATASTSR) the composition is skewed to polar residues. A compositionally biased stretch (basic and acidic residues) spans 423–439 (AKPEGSPRRATNESRKV).

The protein belongs to the PNMA family.

The protein is Paraneoplastic antigen-like protein 8A (PNMA8A) of Pongo abelii (Sumatran orangutan).